A 370-amino-acid polypeptide reads, in one-letter code: NADH-quinone oxidoreductase subunit D (370 aa).

The protein belongs to the complex I 49 kDa subunit family. NDH-1 is composed of 14 different subunits. Subunits NuoB, C, D, E, F, and G constitute the peripheral sector of the complex.

It is found in the cell membrane. The enzyme catalyses a quinone + NADH + 5 H(+)(in) = a quinol + NAD(+) + 4 H(+)(out). NDH-1 shuttles electrons from NADH, via FMN and iron-sulfur (Fe-S) centers, to quinones in the respiratory chain. The immediate electron acceptor for the enzyme in this species is believed to be a menaquinone. Couples the redox reaction to proton translocation (for every two electrons transferred, four hydrogen ions are translocated across the cytoplasmic membrane), and thus conserves the redox energy in a proton gradient. In Clostridium beijerinckii (strain ATCC 51743 / NCIMB 8052) (Clostridium acetobutylicum), this protein is NADH-quinone oxidoreductase subunit D.